We begin with the raw amino-acid sequence, 179 residues long: Large ribosomal subunit protein uL5 (179 aa).

Belongs to the universal ribosomal protein uL5 family. As to quaternary structure, part of the 50S ribosomal subunit; part of the 5S rRNA/L5/L18/L25 subcomplex. Contacts the 5S rRNA and the P site tRNA. Forms a bridge to the 30S subunit in the 70S ribosome.

This is one of the proteins that bind and probably mediate the attachment of the 5S RNA into the large ribosomal subunit, where it forms part of the central protuberance. In the 70S ribosome it contacts protein S13 of the 30S subunit (bridge B1b), connecting the 2 subunits; this bridge is implicated in subunit movement. Contacts the P site tRNA; the 5S rRNA and some of its associated proteins might help stabilize positioning of ribosome-bound tRNAs. The polypeptide is Large ribosomal subunit protein uL5 (Shewanella sp. (strain ANA-3)).